A 209-amino-acid chain; its full sequence is Ribonuclease HII (209 aa).

Residues 25–209 (RRIAGIDEAG…ATFRGVREYL (185 aa)) enclose the RNase H type-2 domain. Asp-31, Glu-32, and Asp-123 together coordinate a divalent metal cation.

It belongs to the RNase HII family. It depends on Mn(2+) as a cofactor. Mg(2+) serves as cofactor.

The protein resides in the cytoplasm. The catalysed reaction is Endonucleolytic cleavage to 5'-phosphomonoester.. Its function is as follows. Endonuclease that specifically degrades the RNA of RNA-DNA hybrids. In Syntrophotalea carbinolica (strain DSM 2380 / NBRC 103641 / GraBd1) (Pelobacter carbinolicus), this protein is Ribonuclease HII.